The sequence spans 200 residues: 3-isopropylmalate dehydratase small subunit (200 aa).

Belongs to the LeuD family. LeuD type 1 subfamily. In terms of assembly, heterodimer of LeuC and LeuD.

It carries out the reaction (2R,3S)-3-isopropylmalate = (2S)-2-isopropylmalate. It functions in the pathway amino-acid biosynthesis; L-leucine biosynthesis; L-leucine from 3-methyl-2-oxobutanoate: step 2/4. Its function is as follows. Catalyzes the isomerization between 2-isopropylmalate and 3-isopropylmalate, via the formation of 2-isopropylmaleate. This chain is 3-isopropylmalate dehydratase small subunit, found in Vibrio cholerae serotype O1 (strain ATCC 39541 / Classical Ogawa 395 / O395).